A 200-amino-acid polypeptide reads, in one-letter code: Pyridoxine/pyridoxamine 5'-phosphate oxidase (200 aa).

FMN-binding positions include 48–53 (RMVLLK), 63–64 (YT), K70, and Q92. K53 contributes to the substrate binding site. The substrate site is built by Y110, R114, and S118. Residues 127-128 (QS) and W171 contribute to the FMN site. 177-179 (RLH) provides a ligand contact to substrate. FMN is bound at residue R181.

This sequence belongs to the pyridoxamine 5'-phosphate oxidase family. As to quaternary structure, homodimer. The cofactor is FMN.

It catalyses the reaction pyridoxamine 5'-phosphate + O2 + H2O = pyridoxal 5'-phosphate + H2O2 + NH4(+). The catalysed reaction is pyridoxine 5'-phosphate + O2 = pyridoxal 5'-phosphate + H2O2. It functions in the pathway cofactor metabolism; pyridoxal 5'-phosphate salvage; pyridoxal 5'-phosphate from pyridoxamine 5'-phosphate: step 1/1. Its pathway is cofactor metabolism; pyridoxal 5'-phosphate salvage; pyridoxal 5'-phosphate from pyridoxine 5'-phosphate: step 1/1. Catalyzes the oxidation of either pyridoxine 5'-phosphate (PNP) or pyridoxamine 5'-phosphate (PMP) into pyridoxal 5'-phosphate (PLP). The sequence is that of Pyridoxine/pyridoxamine 5'-phosphate oxidase from Cereibacter sphaeroides (strain ATCC 17029 / ATH 2.4.9) (Rhodobacter sphaeroides).